Reading from the N-terminus, the 524-residue chain is Tyrosine-protein kinase HCK (524 aa).

Residues 1–72 are disordered; it reads MGGRSSCEDP…NNSNSMPPGF (72 aa). A lipid anchor (N-myristoyl glycine) is attached at glycine 2. Residue glycine 3 is the site of S-palmitoyl cysteine attachment. Basic and acidic residues predominate over residues 29–38; the sequence is FLRDGSKASK. At tyrosine 50 the chain carries Phosphotyrosine; by autocatalysis. Positions 54 to 68 are enriched in polar residues; that stretch reads PTSSSKLGPNNSNSM. The SH3 domain maps to 76-136; it reads SEDTIVVALY…PSNYVARVNS (61 aa). One can recognise an SH2 domain in the interval 142–239; that stretch reads WFFKGISRKD…GLCQKLSVPC (98 aa). A Phosphothreonine modification is found at threonine 200. Tyrosine 207 is modified (phosphotyrosine). Residues 260-513 form the Protein kinase domain; the sequence is LQMEKKLGAG…YIQSVLDDFY (254 aa). ATP contacts are provided by residues 266–274 and lysine 288; that span reads LGAGQFGEV. The Proton acceptor role is filled by aspartate 379. Tyrosine 409 bears the Phosphotyrosine; by autocatalysis mark. Serine 460 carries the post-translational modification Phosphoserine. Tyrosine 520 is modified (phosphotyrosine).

It belongs to the protein kinase superfamily. Tyr protein kinase family. SRC subfamily. Interacts with ADAM15. Interacts with FASLG. Interacts with ARRB1 and ARRB2. Interacts with FCGR1A; the interaction may be indirect. Interacts with IL6ST. Interacts (via SH3 domain) with ELMO1. Interacts (via SH3 domain) with TP73. Interacts with YAP1. Interacts with ABL1 and ITGB1, and thereby recruits ABL1 to activated ITGB1. Interacts (via SH2 domain) with FLT3 (tyrosine phosphorylated). Interacts with CBL. Interacts with VAV1, WAS and RAPGEF1. Interacts (via SH3 domain) with WDCP. Phosphorylated on several tyrosine residues. Autophosphorylated. Becomes rapidly phosphorylated upon activation of the immunoglobulin receptors FCGR1A and FCGR2A. Phosphorylation at Tyr-409 increases kinase activity. Phosphorylation at Tyr-520 inhibits kinase activity. Kinase activity is not required for phosphorylation at Tyr-520, suggesting that this site may be a target of other kinases. In terms of processing, ubiquitinated by CBL, leading to its degradation via the proteasome. Post-translationally, isoform 2 palmitoylation at position 2 requires prior myristoylation. Palmitoylation at position 3 is required for caveolar localization of isoform 2. As to expression, expressed predominantly in cells of the myeloid and B-lymphoid lineages.

The protein localises to the cytoplasmic vesicle. The protein resides in the secretory vesicle. It localises to the cytoplasm. Its subcellular location is the cytosol. It is found in the membrane. The protein localises to the caveola. The protein resides in the lysosome. It localises to the cell projection. Its subcellular location is the podosome membrane. It is found in the cell membrane. The protein localises to the cell junction. The protein resides in the focal adhesion. It localises to the cytoskeleton. Its subcellular location is the golgi apparatus. It is found in the nucleus. It carries out the reaction L-tyrosyl-[protein] + ATP = O-phospho-L-tyrosyl-[protein] + ADP + H(+). With respect to regulation, subject to autoinhibition, mediated by intramolecular interactions involving the SH2 and SH3 domains. Kinase activity is also regulated by phosphorylation at regulatory tyrosine residues. Phosphorylation at Tyr-409 is required for optimal activity. Phosphorylation at Tyr-520 inhibits kinase activity. Inhibited by PP1. In terms of biological role, non-receptor tyrosine-protein kinase found in hematopoietic cells that transmits signals from cell surface receptors and plays an important role in the regulation of innate immune responses, including neutrophil, monocyte, macrophage and mast cell functions, phagocytosis, cell survival and proliferation, cell adhesion and migration. Acts downstream of receptors that bind the Fc region of immunoglobulins, such as FCGR1A and FCGR2A, but also CSF3R, PLAUR, the receptors for IFNG, IL2, IL6 and IL8, and integrins, such as ITGB1 and ITGB2. During the phagocytic process, mediates mobilization of secretory lysosomes, degranulation, and activation of NADPH oxidase to bring about the respiratory burst. Plays a role in the release of inflammatory molecules. Promotes reorganization of the actin cytoskeleton and actin polymerization, formation of podosomes and cell protrusions. Inhibits TP73-mediated transcription activation and TP73-mediated apoptosis. Phosphorylates CBL in response to activation of immunoglobulin gamma Fc region receptors. Phosphorylates ADAM15, BCR, ELMO1, FCGR2A, GAB1, GAB2, RAPGEF1, STAT5B, TP73, VAV1 and WAS. This chain is Tyrosine-protein kinase HCK (Hck), found in Mus musculus (Mouse).